The primary structure comprises 745 residues: MSTPTSNESTSSSSNNSDQRVLFPDIQRDDIQVGDHIGVGTFGAVFSGNWTLPDGSQRTIALKKVFVLEKEAEILSKIRHKNIIQFYGICKATGNDFFIVTEYAEKGSLYDFIHSEESQSFASSSGGNSFDVVVKWASQIASGIQYLHYDAVDTIIHRDLKSKNVVLDKNLVCKICDFGTSKDLTHSCTAPSWGGTAAWMSPEMILQSEGLTTATDVWSYGVVLWEILSKEVPYKDYSEFRIFTMITQSGITLAIPPSCPAPLKQLMSNCWKMTPKDRANMRQIQGELNRLAGNQKVMDECEKFMGLEDWKTEIEKQEKNVEKMRKDLEKRREQLEIREKALKQRMKVEQAVLDSARHPPEDVHQWSEHHTSHWVETVLGRVANDKKFLDRVNAAVFRNRITGARLLGMTQNDLEHLGVHKVGSRIELMKMIRKLADTQKALHNFPTLEQAKRIEMTLKTEKEAAGQLANDVDIVIIVGMYVRKMNATRRKFKFYADSDWIDDTDIPAKSKSKHASSLIKTVCFSVLDENTKKPINEPACSISSGMTTNPDWITVDTEDDVKIRVIVSVYYADIVTQPRNTEVIKVVTSLEESKILEERHVHLRLRRSSSSASISTPSPVIAPVYHPFGHLNNGFHHTTSSPQLRGFWHRKQTGMNRHGLTETELSSLQEQLRTPSPDKKVVDENVIIHVPKLTRRRRTTTTNSEDTEKSDTNNKTPESQARRVHVHGGKDKWNWKKGKSRPKFT.

Residues 31–305 (IQVGDHIGVG…KVMDECEKFM (275 aa)) form the Protein kinase domain. Residues 37 to 45 (IGVGTFGAV) and Lys63 each bind ATP. Asp159 acts as the Proton acceptor in catalysis. Residues 307 to 352 (LEDWKTEIEKQEKNVEKMRKDLEKRREQLEIREKALKQRMKVEQAV) adopt a coiled-coil conformation. The 73-residue stretch at 366–438 (WSEHHTSHWV…MKMIRKLADT (73 aa)) folds into the SAM domain. A disordered region spans residues 693–745 (LTRRRRTTTTNSEDTEKSDTNNKTPESQARRVHVHGGKDKWNWKKGKSRPKFT). Residues 735-745 (WKKGKSRPKFT) are compositionally biased toward basic residues.

This sequence belongs to the protein kinase superfamily. STE Ser/Thr protein kinase family. MAP kinase kinase kinase subfamily. The cofactor is Mg(2+). As to expression, widely expressed; expressed in most tissues, including intestines, muscle and the nervous system.

It localises to the cytoplasm. The protein localises to the nucleus. The enzyme catalyses L-seryl-[protein] + ATP = O-phospho-L-seryl-[protein] + ADP + H(+). The catalysed reaction is L-threonyl-[protein] + ATP = O-phospho-L-threonyl-[protein] + ADP + H(+). Functionally, stress-activated component of a protein kinase signal transduction cascade that promotes programmed cell death in response to ribotoxic stress. Acts as the proximal sensor of ribotoxic stress: directly binds to the ribosome, thereby acting as a sentinel for colliding ribosomes. Upon ribosome collisions, activates the stress-activated protein kinase signal transduction cascade, leading to programmed cell death. Acts by catalyzing phosphorylation of MAP kinase kinases, leading to activation of the JNK and MAP kinase p38 pathways. This chain is Mitogen-activated protein kinase kinase kinase zak-1, found in Caenorhabditis elegans.